Reading from the N-terminus, the 443-residue chain is Chromosomal replication initiator protein DnaA (443 aa).

Residues 1–67 (MDAWSRSLER…RELLAHFAGF (67 aa)) form a domain I, interacts with DnaA modulators region. The interval 67 to 105 (FSDVFLEIGSRPRPVEAQNAPVSTPSAHVSSEPQVPFAG) is domain II. A domain III, AAA+ region region spans residues 106–323 (NLDNHYTFAN…GALNTLTARA (218 aa)). Gly151, Gly153, Lys154, and Thr155 together coordinate ATP. The tract at residues 324-443 (NFTGRAITTE…WDKLIRKLSE (120 aa)) is domain IV, binds dsDNA.

This sequence belongs to the DnaA family. Oligomerizes as a right-handed, spiral filament on DNA at oriC.

It localises to the cytoplasm. Its function is as follows. Plays an essential role in the initiation and regulation of chromosomal replication. ATP-DnaA binds to the origin of replication (oriC) to initiate formation of the DNA replication initiation complex once per cell cycle. Binds the DnaA box (a 9 base pair repeat at the origin) and separates the double-stranded (ds)DNA. Forms a right-handed helical filament on oriC DNA; dsDNA binds to the exterior of the filament while single-stranded (ss)DNA is stabiized in the filament's interior. The ATP-DnaA-oriC complex binds and stabilizes one strand of the AT-rich DNA unwinding element (DUE), permitting loading of DNA polymerase. After initiation quickly degrades to an ADP-DnaA complex that is not apt for DNA replication. Binds acidic phospholipids. The sequence is that of Chromosomal replication initiator protein DnaA from Stenotrophomonas maltophilia (strain K279a).